The chain runs to 349 residues: 5-deoxyribose 1-phosphate isomerase (349 aa).

Residues 49–51 (RGA), Arg-92, and Gln-199 each bind substrate. The Proton donor role is filled by Asp-240. 250 to 251 (NK) is a binding site for substrate.

It belongs to the EIF-2B alpha/beta/delta subunits family. DrdI subfamily.

It carries out the reaction 5-deoxy-alpha-D-ribose 1-phosphate = 5-deoxy-D-ribulose 1-phosphate. It participates in carbohydrate degradation. Its function is as follows. Catalyzes the isomerization of 5-deoxy-alpha-D-ribose 1-phosphate to 5-deoxy-D-ribulose 1-phosphate, as part of a 5-deoxyribose salvage pathway that recycles this toxic radical SAM enzyme by-product to mainstream metabolites. The sequence is that of 5-deoxyribose 1-phosphate isomerase from Clostridium botulinum (strain ATCC 19397 / Type A).